We begin with the raw amino-acid sequence, 396 residues long: Elongation factor Tu (396 aa).

Positions 10–205 (KPHVNIGTIG…AVDESIPDPV (196 aa)) constitute a tr-type G domain. The tract at residues 19–26 (GHVDHGKT) is G1. 19 to 26 (GHVDHGKT) serves as a coordination point for GTP. Threonine 26 is a Mg(2+) binding site. The G2 stretch occupies residues 62 to 66 (GITIN). Positions 83 to 86 (DAPG) are G3. GTP-binding positions include 83–87 (DAPGH) and 138–141 (NKAD). The segment at 138–141 (NKAD) is G4. The interval 175-177 (SGL) is G5.

This sequence belongs to the TRAFAC class translation factor GTPase superfamily. Classic translation factor GTPase family. EF-Tu/EF-1A subfamily. As to quaternary structure, monomer.

Its subcellular location is the cytoplasm. It catalyses the reaction GTP + H2O = GDP + phosphate + H(+). In terms of biological role, GTP hydrolase that promotes the GTP-dependent binding of aminoacyl-tRNA to the A-site of ribosomes during protein biosynthesis. The chain is Elongation factor Tu from Nocardia farcinica (strain IFM 10152).